The primary structure comprises 145 residues: Neuropeptide-like protein 68 (145 aa).

An N-terminal signal peptide occupies residues 1 to 15 (MLLVLLFSLFSVGFG). The disordered stretch occupies residues 41 to 65 (SSSSEDDTPDFPSLRDKRGVDPMSI).

It is found in the secreted. The chain is Neuropeptide-like protein 68 from Caenorhabditis elegans.